Here is a 754-residue protein sequence, read N- to C-terminus: ToMV resistance protein Tm-1(GCR237) (754 aa).

The interval 1–201 (MATAQSNSPR…AGMVIGRLES (201 aa)) is N-terminal inhibitory domain NN. Residues 18 to 20 (DTK), threonine 55, arginine 92, and 124 to 127 (GSGG) contribute to the ATP site. The segment at 211–431 (KFTVGVTMFG…VDSFLEISPK (221 aa)) is N-terminal inhibitory domain NC.

It belongs to the UPF0261 family. As to quaternary structure, homodimer. (Microbial infection) Binds, via an ATP bridge, to the tobamoviruses avirulent (Avr) replication proteins (large and small subunits, e.g. tomato mosaic virus (ToMV/TMV) AC P03587, tobacco mild green mosaic virus (TMGMV) AC P18339 and pepper mild mottle virus (PMMoV) AC P89657) to inhibit their function after the translation of tobamoviruses RNA, but before the viral replication complex formation on the membrane surfaces; this interaction is not possible with resistance-breaking strains replication proteins.

Its function is as follows. Inhibitor of viral RNA replication which confers resistance to some tobamoviruses including tomato mosaic virus (ToMV) (e.g. isolate L), tobacco mosaic virus (TMV), tobacco mild green mosaic virus (TMGMV) and pepper mild mottle virus (PMMoV), but not to resistance-breaking isolates of ToMV (e.g. LT1, SL-1 and ToMV1-2) and tomato brown rugose fruit virus (ToBRFV). Prevents tobamoviruses RNA replication by affecting the association of tobamoviruses replication proteins (large and small subunits) with host membrane-associated proteins (e.g. TOM1, TOM2A and ARL8), thus inhibiting the replication complex formation on the membranes and avoiding viral negative-strand RNA synthesis. Inhibits triphosphatase activity of ToMV replication proteins. This chain is ToMV resistance protein Tm-1(GCR237), found in Solanum lycopersicum (Tomato).